The following is a 515-amino-acid chain: Organic cation/carnitine transporter 5 (515 aa).

Topologically, residues 1–43 (MADSLAPLLPTHIEEDEDTSSPLTFDKILEKSLSDFGFSQFLQ) are cytoplasmic. A helical transmembrane segment spans residues 44 to 64 (IVLVGLALTFDSQQIFITVFT). The Extracellular segment spans residues 65-124 (DAYPTWHCLDHTICNPATTDICKIPRSAWDWDGGFKGKSVISEFDLECSSSFLRSLPSST). The chain crosses the membrane as a helical span at residues 125-145 (FYVGSIVGGVVLAMIPDGSLG). At 146-149 (RKQL) the chain is on the cytoplasmic side. Residues 150–172 (LFFSSFAMSLTGISIFLSSNIWI) traverse the membrane as a helical segment. Over 173–177 (YSFLK) the chain is Extracellular. The helical transmembrane segment at 178–195 (FVIGFARSQTGTYALVLI) threads the bilayer. 195–202 (ISERISTK) serves as a coordination point for ATP. Over 196–208 (SERISTKWRPRAT) the chain is Cytoplasmic. The chain crosses the membrane as a helical span at residues 209-229 (MVPFTLFVLGFMSLSGIAYLV). The Extracellular portion of the chain corresponds to 230-235 (RHASWK). Residues 236–256 (VLYLCTSIPAGIHSIFIYFFA) traverse the membrane as a helical segment. The Cytoplasmic segment spans residues 257 to 320 (LESPRWLHLE…LFIIKWAFRR (64 aa)). Residues 321-341 (VTLVMIIMFGLGMSYYGVPLA) traverse the membrane as a helical segment. The Extracellular portion of the chain corresponds to 342–350 (VRDIKVNIY). A helical transmembrane segment spans residues 351–371 (MSEALNAMVELPTFVVTPILL). Over 372–379 (EQFSRRSS) the chain is Cytoplasmic. A helical transmembrane segment spans residues 380-400 (VLVNCLIGGASGVLCFVMSLY). Residues 401-411 (GRTKIAFALEL) are Extracellular-facing. Residues 412–432 (GSFFCARIGFNLMAIYLVELF) traverse the membrane as a helical segment. Over 433 to 441 (PTCVRNSAT) the chain is Cytoplasmic. Residues 442-462 (MMLRQALVVGGACCPLIASLG) traverse the membrane as a helical segment. Over 463 to 467 (RNVPS) the chain is Extracellular. Residues 468-488 (LSFAVFGFAMSGLGLFALLLP) form a helical membrane-spanning segment. Over 489-515 (ETKGLSLCDTMEEQEQRDQALKTSHSC) the chain is Cytoplasmic.

This sequence belongs to the major facilitator (TC 2.A.1) superfamily. Organic cation transporter (TC 2.A.1.19) family. As to expression, mostly expressed in leaves and siliques, and, to a lower extent, in roots, stems and flowers.

The protein localises to the vacuole membrane. Its function is as follows. High affinity carnitine transporter involved in the active cellular uptake of carnitine. Also transports organic cations. The sequence is that of Organic cation/carnitine transporter 5 (OCT5) from Arabidopsis thaliana (Mouse-ear cress).